The following is a 119-amino-acid chain: Myohemerythrin-1 (119 aa).

Residues His25, His55, Asn58, Glu59, His74, His78, His107, and Asp112 each coordinate Fe cation.

The protein belongs to the hemerythrin family. As to quaternary structure, monomer. In terms of tissue distribution, muscle.

In terms of biological role, myohemerythrin is an oxygen-binding protein found in the retractor muscles of certain worms. The oxygen-binding site contains two iron atoms. The protein is Myohemerythrin-1 of Phascolopsis gouldii (Peanut worm).